The primary structure comprises 197 residues: Presequence translocated-associated motor subunit PAM17, mitochondrial (197 aa).

The N-terminal 14 residues, 1-14 (MFTSAIRLSSQRLF), are a transit peptide targeting the mitochondrion. 2 helical membrane-spanning segments follow: residues 64–84 (INVG…WAYL) and 103–123 (VISA…PIVG).

The protein belongs to the PAM17 family. In terms of assembly, component of the PAM complex, at least composed of mtHsp70, MGE1, TIM44, PAM16, PAM17 and PAM18/TIM14.

It localises to the mitochondrion inner membrane. In terms of biological role, component of the PAM complex, a complex required for the translocation of transit peptide-containing proteins from the inner membrane into the mitochondrial matrix in an ATP-dependent manner. In the complex, it is required to organize PAM16-PAM18 (TIM16-TIM14) heterodimer. This chain is Presequence translocated-associated motor subunit PAM17, mitochondrial (PAM17), found in Saccharomyces cerevisiae (strain ATCC 204508 / S288c) (Baker's yeast).